Reading from the N-terminus, the 200-residue chain is MIALLTGQIAHKSPDHVILDVHGVGYRVMIPFSTYYELPEEGQATLHIHTSVREDAILLYGFRTRTEKSFFQLLISVSGIGPKLARDILSNIQPPQLAAALQQGDLHKLSAIPGIGKKTAERLVLELKDKAGKLDSGSIPAGDAVGRSLPAGSVLDDVSSALVNLGYKDPQVRKVLAELDCAGSASVEEVLKQALKILMK.

The interval 1–63 (MIALLTGQIA…EDAILLYGFR (63 aa)) is domain I. A domain II region spans residues 64 to 142 (TRTEKSFFQL…KLDSGSIPAG (79 aa)). Residues 143–153 (DAVGRSLPAGS) are flexible linker. The segment at 153–200 (SVLDDVSSALVNLGYKDPQVRKVLAELDCAGSASVEEVLKQALKILMK) is domain III.

The protein belongs to the RuvA family. As to quaternary structure, homotetramer. Forms an RuvA(8)-RuvB(12)-Holliday junction (HJ) complex. HJ DNA is sandwiched between 2 RuvA tetramers; dsDNA enters through RuvA and exits via RuvB. An RuvB hexamer assembles on each DNA strand where it exits the tetramer. Each RuvB hexamer is contacted by two RuvA subunits (via domain III) on 2 adjacent RuvB subunits; this complex drives branch migration. In the full resolvosome a probable DNA-RuvA(4)-RuvB(12)-RuvC(2) complex forms which resolves the HJ.

It is found in the cytoplasm. Its function is as follows. The RuvA-RuvB-RuvC complex processes Holliday junction (HJ) DNA during genetic recombination and DNA repair, while the RuvA-RuvB complex plays an important role in the rescue of blocked DNA replication forks via replication fork reversal (RFR). RuvA specifically binds to HJ cruciform DNA, conferring on it an open structure. The RuvB hexamer acts as an ATP-dependent pump, pulling dsDNA into and through the RuvAB complex. HJ branch migration allows RuvC to scan DNA until it finds its consensus sequence, where it cleaves and resolves the cruciform DNA. The protein is Holliday junction branch migration complex subunit RuvA of Trichlorobacter lovleyi (strain ATCC BAA-1151 / DSM 17278 / SZ) (Geobacter lovleyi).